Reading from the N-terminus, the 37-residue chain is Fructose-bisphosphate aldolase A (37 aa).

It belongs to the class I fructose-bisphosphate aldolase family. Tetramer.

The enzyme catalyses beta-D-fructose 1,6-bisphosphate = D-glyceraldehyde 3-phosphate + dihydroxyacetone phosphate. Its pathway is carbohydrate degradation; glycolysis; D-glyceraldehyde 3-phosphate and glycerone phosphate from D-glucose: step 4/4. Its function is as follows. Plays a key role in glycolysis and gluconeogenesis. The chain is Fructose-bisphosphate aldolase A from Thunnus albacares (Yellowfin tuna).